A 995-amino-acid chain; its full sequence is Serine-aspartate repeat-containing protein C (995 aa).

A signal peptide spans 1–50; it reads MNNKKTATNRKGMIPNRLNKFSIRKYSVGTASILVGTTLIFGLSGHEAKA. The YSIRK-G/S signaling motif signature appears at 21 to 32; that stretch reads FSIRKYSVGTAS. Residues 51–164 are disordered; that stretch reads AEHTNGELNQ…STTPKTTTIK (114 aa). Positions 51–495 are ligand binding A region; that stretch reads AEHTNGELNQ…GSSTANGDQK (445 aa). Residues 56 to 71 show a composition bias toward polar residues; that stretch reads GELNQSKNETTAPSEN. Residues 72 to 83 are compositionally biased toward basic and acidic residues; sequence KTTKKVDSRQLK. The span at 84–155 shows a compositional bias: polar residues; sequence DNTQTATADQ…SNLTQAKDVS (72 aa). CNA-B domains lie at 496–606 and 607–717; these read KYNL…YKTP and KYSL…EEET. Residues 678–975 are disordered; the sequence is TQTGTNTTED…NNSNNGTLFG (298 aa). 2 stretches are compositionally biased toward acidic residues: residues 685 to 695 and 712 to 934; these read TEDDKDADGGE and YYEE…DSDS. Residues 958–962 carry the LPXTG sorting signal motif; the sequence is LPETG. Residues 960–975 are compositionally biased toward low complexity; that stretch reads ETGSENNNSNNGTLFG. T961 is subject to Pentaglycyl murein peptidoglycan amidated threonine. Positions 962–995 are cleaved as a propeptide — removed by sortase; sequence GSENNNSNNGTLFGGLFAALGSLLLFGRRKKQNK.

It belongs to the serine-aspartate repeat-containing protein (SDr) family. In terms of assembly, homodimerizes; via N2-Domain. Interacts with host NRXN1; this interaction mediates bacterial attachment to host cells.

It is found in the secreted. Its subcellular location is the cell wall. In terms of biological role, cell surface-associated calcium-binding protein which plays an important role in adhesion and pathogenesis. Mediates interactions with components of the extracellular matrix such as host NRXN1 to promote bacterial adhesion. This chain is Serine-aspartate repeat-containing protein C (sdrC), found in Staphylococcus aureus (strain NCTC 8325 / PS 47).